We begin with the raw amino-acid sequence, 215 residues long: Putative lipoprotein NMB1124/NMB1162 (215 aa).

Positions 1–16 are cleaved as a signal peptide; sequence MKPLILGLAAVLALSA. Cys17 carries N-palmitoyl cysteine lipidation. The S-diacylglycerol cysteine moiety is linked to residue Cys17.

Its subcellular location is the cell membrane. The polypeptide is Putative lipoprotein NMB1124/NMB1162 (Neisseria meningitidis serogroup B (strain ATCC BAA-335 / MC58)).